The sequence spans 387 residues: Phosphoglycerate kinase (387 aa).

Substrate is bound by residues Asp-21 to Asn-23, Arg-36, His-59 to Arg-62, Arg-113, and Arg-146. ATP is bound by residues Lys-197, Glu-314, and Gly-340–Thr-343.

The protein belongs to the phosphoglycerate kinase family. As to quaternary structure, monomer.

The protein resides in the cytoplasm. The catalysed reaction is (2R)-3-phosphoglycerate + ATP = (2R)-3-phospho-glyceroyl phosphate + ADP. It participates in carbohydrate degradation; glycolysis; pyruvate from D-glyceraldehyde 3-phosphate: step 2/5. This chain is Phosphoglycerate kinase, found in Pseudomonas paraeruginosa (strain DSM 24068 / PA7) (Pseudomonas aeruginosa (strain PA7)).